The sequence spans 416 residues: Peroxisomal isocitrate dehydrogenase [NADP] (416 aa).

Residues Thr77 to Thr79 and Arg84 each bind NADP(+). Residue Thr79 participates in substrate binding. Residues Ser96–Arg102, Arg111, and Arg134 each bind substrate. A Mn(2+)-binding site is contributed by Asp253. Lys261 is a binding site for NADP(+). Asp276 lines the Mn(2+) pocket. Residues Gly311 to His316 and Asn329 each bind NADP(+). The Peroxisomal targeting signal signature appears at Ser414–Leu416.

Belongs to the isocitrate and isopropylmalate dehydrogenases family. Requires Mg(2+) as cofactor. It depends on Mn(2+) as a cofactor.

Its subcellular location is the peroxisome. It carries out the reaction D-threo-isocitrate + NADP(+) = 2-oxoglutarate + CO2 + NADPH. May be involved in response to oxidative stresses. The sequence is that of Peroxisomal isocitrate dehydrogenase [NADP] (ICDH) from Arabidopsis thaliana (Mouse-ear cress).